Consider the following 64-residue polypeptide: Large ribosomal subunit protein bL35 (64 aa).

The span at 1–26 (MPKMKSHRGASKRFKRTASGKLKRSH) shows a compositional bias: basic residues. Residues 1–42 (MPKMKSHRGASKRFKRTASGKLKRSHAYTSHLFANKSTKAKR) are disordered.

The protein belongs to the bacterial ribosomal protein bL35 family.

This is Large ribosomal subunit protein bL35 from Exiguobacterium sp. (strain ATCC BAA-1283 / AT1b).